We begin with the raw amino-acid sequence, 1054 residues long: Translation initiation factor IF-2 (1054 aa).

Disordered regions lie at residues 57 to 213 (DKRK…AASC), 225 to 248 (DPLA…NPGD), 287 to 315 (SGRP…HGLQ), and 401 to 436 (DHAG…KQEL). The span at 92–104 (QEPSQAASDVSSP) shows a compositional bias: polar residues. Residues 111–213 (EASGAEAAAS…VTSGRRAASC (103 aa)) are compositionally biased toward low complexity. The segment covering 401-418 (DHAGRGRELVDVSKNKDK) has biased composition (basic and acidic residues). In terms of domain architecture, tr-type G spans 552–721 (TRPPVVTVMG…VLQAEVLELT (170 aa)). A G1 region spans residues 561 to 568 (GHVDHGKT). 561 to 568 (GHVDHGKT) lines the GTP pocket. Residues 586–590 (GITQH) form a G2 region. The tract at residues 607–610 (DTPG) is G3. Residues 607–611 (DTPGH) and 661–664 (NKMD) each bind GTP. Positions 661–664 (NKMD) are G4. A G5 region spans residues 697 to 699 (SAK).

This sequence belongs to the TRAFAC class translation factor GTPase superfamily. Classic translation factor GTPase family. IF-2 subfamily.

Its subcellular location is the cytoplasm. One of the essential components for the initiation of protein synthesis. Protects formylmethionyl-tRNA from spontaneous hydrolysis and promotes its binding to the 30S ribosomal subunits. Also involved in the hydrolysis of GTP during the formation of the 70S ribosomal complex. This chain is Translation initiation factor IF-2 (infB), found in Stigmatella aurantiaca.